The sequence spans 71 residues: Conotoxin Vc6.12 (71 aa).

The N-terminal stretch at 1–19 (MQKLIILLLVAAVLMSTQA) is a signal peptide. A propeptide spanning residues 20-43 (LFQEKRPMKKINFLSKGKTDAEKQ) is cleaved from the precursor. Cystine bridges form between Cys-48/Cys-62, Cys-55/Cys-66, and Cys-61/Cys-70.

This sequence belongs to the conotoxin O2 superfamily. As to expression, expressed by the venom duct.

It is found in the secreted. Functionally, inhibits voltage-gated ion channels. The sequence is that of Conotoxin Vc6.12 from Conus victoriae (Queen Victoria cone).